Consider the following 241-residue polypeptide: Octanoyltransferase (241 aa).

Positions 43–228 (AETPDEIWLV…CLTANLDGSP (186 aa)) constitute a BPL/LPL catalytic domain. Substrate-binding positions include 83–90 (RGGQITYH), 159–161 (ALG), and 172–174 (GVS). The active-site Acyl-thioester intermediate is the C190.

Belongs to the LipB family.

It localises to the cytoplasm. It carries out the reaction octanoyl-[ACP] + L-lysyl-[protein] = N(6)-octanoyl-L-lysyl-[protein] + holo-[ACP] + H(+). It participates in protein modification; protein lipoylation via endogenous pathway; protein N(6)-(lipoyl)lysine from octanoyl-[acyl-carrier-protein]: step 1/2. Catalyzes the transfer of endogenously produced octanoic acid from octanoyl-acyl-carrier-protein onto the lipoyl domains of lipoate-dependent enzymes. Lipoyl-ACP can also act as a substrate although octanoyl-ACP is likely to be the physiological substrate. In Paraburkholderia xenovorans (strain LB400), this protein is Octanoyltransferase.